The primary structure comprises 438 residues: UPF0229 protein R01398 (438 aa).

Positions 55-107 (PARGVNEPAFQPDSNSGERRHVLPGNREFAAGDRIPKRGSGGGAGNAGAGTGQ) are disordered. Positions 93–105 (GSGGGAGNAGAGT) are enriched in gly residues.

It belongs to the UPF0229 family.

This chain is UPF0229 protein R01398, found in Rhizobium meliloti (strain 1021) (Ensifer meliloti).